The following is a 171-amino-acid chain: ATP synthase subunit b (171 aa).

Residues I26–I46 form a helical membrane-spanning segment.

It belongs to the ATPase B chain family. In terms of assembly, F-type ATPases have 2 components, F(1) - the catalytic core - and F(0) - the membrane proton channel. F(1) has five subunits: alpha(3), beta(3), gamma(1), delta(1), epsilon(1). F(0) has four main subunits: a(1), b(1), b'(1) and c(10-14). The alpha and beta chains form an alternating ring which encloses part of the gamma chain. F(1) is attached to F(0) by a central stalk formed by the gamma and epsilon chains, while a peripheral stalk is formed by the delta, b and b' chains.

The protein resides in the cellular thylakoid membrane. F(1)F(0) ATP synthase produces ATP from ADP in the presence of a proton or sodium gradient. F-type ATPases consist of two structural domains, F(1) containing the extramembraneous catalytic core and F(0) containing the membrane proton channel, linked together by a central stalk and a peripheral stalk. During catalysis, ATP synthesis in the catalytic domain of F(1) is coupled via a rotary mechanism of the central stalk subunits to proton translocation. Functionally, component of the F(0) channel, it forms part of the peripheral stalk, linking F(1) to F(0). The sequence is that of ATP synthase subunit b from Synechococcus sp. (strain RCC307).